Consider the following 82-residue polypeptide: Sigma-G-dependent sporulation-specific SASP protein (82 aa).

This chain is Sigma-G-dependent sporulation-specific SASP protein, found in Bacillus subtilis (strain 168).